A 260-amino-acid polypeptide reads, in one-letter code: Tetraspanin-14 (260 aa).

Residues 1–10 are Cytoplasmic-facing; the sequence is MKSQSHKPWN. The chain crosses the membrane as a helical span at residues 11 to 31; sequence LVAGIFFPIITFFLSAPLVGH. The Extracellular portion of the chain corresponds to 32–54; it reads ALYLFCMRNDHVYYRDFQSTLPR. The chain crosses the membrane as a helical span at residues 55 to 75; it reads VQTLVSVSLLALFLLSNIGMF. The Cytoplasmic segment spans residues 76–80; it reads LRPRR. A helical membrane pass occupies residues 81-101; sequence LSYFLVIVFFIGFAYSGVYKM. The Extracellular portion of the chain corresponds to 102 to 260; the sequence is ESRRFSPTPM…FLSSLTSLFR (159 aa). Residue asparagine 182 is glycosylated (N-linked (GlcNAc...) asparagine).

The protein belongs to the tetraspanin (TM4SF) family.

The protein localises to the membrane. May be involved in the regulation of cell differentiation. In Arabidopsis thaliana (Mouse-ear cress), this protein is Tetraspanin-14 (TET14).